A 159-amino-acid polypeptide reads, in one-letter code: 2-C-methyl-D-erythritol 2,4-cyclodiphosphate synthase (159 aa).

The a divalent metal cation site is built by Asp10 and His12. 4-CDP-2-C-methyl-D-erythritol 2-phosphate contacts are provided by residues 10 to 12 and 36 to 37; these read DVH and HS. His44 serves as a coordination point for a divalent metal cation. Residues 58–60, 134–137, Phe141, and Arg144 contribute to the 4-CDP-2-C-methyl-D-erythritol 2-phosphate site; these read DIG and TTSE.

The protein belongs to the IspF family. As to quaternary structure, homotrimer. It depends on a divalent metal cation as a cofactor.

The catalysed reaction is 4-CDP-2-C-methyl-D-erythritol 2-phosphate = 2-C-methyl-D-erythritol 2,4-cyclic diphosphate + CMP. It functions in the pathway isoprenoid biosynthesis; isopentenyl diphosphate biosynthesis via DXP pathway; isopentenyl diphosphate from 1-deoxy-D-xylulose 5-phosphate: step 4/6. Involved in the biosynthesis of isopentenyl diphosphate (IPP) and dimethylallyl diphosphate (DMAPP), two major building blocks of isoprenoid compounds. Catalyzes the conversion of 4-diphosphocytidyl-2-C-methyl-D-erythritol 2-phosphate (CDP-ME2P) to 2-C-methyl-D-erythritol 2,4-cyclodiphosphate (ME-CPP) with a corresponding release of cytidine 5-monophosphate (CMP). This is 2-C-methyl-D-erythritol 2,4-cyclodiphosphate synthase from Cereibacter sphaeroides (strain ATCC 17029 / ATH 2.4.9) (Rhodobacter sphaeroides).